A 328-amino-acid polypeptide reads, in one-letter code: Gonadotropin-releasing hormone receptor (328 aa).

At methionine 1 to arginine 38 the chain is on the extracellular side. Asparagine 18 carries an N-linked (GlcNAc...) asparagine glycan. The chain crosses the membrane as a helical span at residues valine 39–leucine 58. The Cytoplasmic segment spans residues lysine 59–lysine 77. The chain crosses the membrane as a helical span at residues leucine 78 to leucine 97. At aspartate 98–lysine 115 the chain is on the extracellular side. N-linked (GlcNAc...) asparagine glycosylation is present at asparagine 102. A disulfide bridge links cysteine 114 with cysteine 196. The chain crosses the membrane as a helical span at residues valine 116–leucine 137. The Cytoplasmic portion of the chain corresponds to aspartate 138 to tryptophan 164. A helical transmembrane segment spans residues leucine 165–alanine 184. Residues aspartate 185–asparagine 212 lie on the Extracellular side of the membrane. Residues phenylalanine 213–alanine 232 form a helical membrane-spanning segment. Residues lysine 233–threonine 281 lie on the Cytoplasmic side of the membrane. Residues proline 282–valine 300 traverse the membrane as a helical segment. Topologically, residues serine 301 to histidine 306 are extracellular. Residues phenylalanine 307–phenylalanine 326 traverse the membrane as a helical segment. The Cytoplasmic segment spans residues serine 327–leucine 328.

Belongs to the G-protein coupled receptor 1 family.

It localises to the cell membrane. Its function is as follows. Receptor for gonadotropin releasing hormone (GnRH) that mediates the action of GnRH to stimulate the secretion of the gonadotropic hormones luteinizing hormone (LH) and follicle-stimulating hormone (FSH). This receptor mediates its action by association with G-proteins that activate a phosphatidylinositol-calcium second messenger system. The polypeptide is Gonadotropin-releasing hormone receptor (GNRHR) (Bos taurus (Bovine)).